Here is a 474-residue protein sequence, read N- to C-terminus: Probable glycine dehydrogenase (decarboxylating) subunit 2 (474 aa).

Lysine 262 is modified (N6-(pyridoxal phosphate)lysine).

It belongs to the GcvP family. C-terminal subunit subfamily. In terms of assembly, the glycine cleavage system is composed of four proteins: P, T, L and H. In this organism, the P 'protein' is a heterodimer of two subunits. The cofactor is pyridoxal 5'-phosphate.

The enzyme catalyses N(6)-[(R)-lipoyl]-L-lysyl-[glycine-cleavage complex H protein] + glycine + H(+) = N(6)-[(R)-S(8)-aminomethyldihydrolipoyl]-L-lysyl-[glycine-cleavage complex H protein] + CO2. In terms of biological role, the glycine cleavage system catalyzes the degradation of glycine. The P protein binds the alpha-amino group of glycine through its pyridoxal phosphate cofactor; CO(2) is released and the remaining methylamine moiety is then transferred to the lipoamide cofactor of the H protein. The chain is Probable glycine dehydrogenase (decarboxylating) subunit 2 from Thermotoga petrophila (strain ATCC BAA-488 / DSM 13995 / JCM 10881 / RKU-1).